Consider the following 201-residue polypeptide: Small ribosomal subunit protein uS4c (201 aa).

The interval 15–44 (LGALPGLTNKRPRAGSDLRNQSRSGKKSQY) is disordered. One can recognise an S4 RNA-binding domain in the interval 89 to 150 (MRLDNILFRL…EQKSKVLIQN (62 aa)).

The protein belongs to the universal ribosomal protein uS4 family. As to quaternary structure, part of the 30S ribosomal subunit. Contacts protein S5. The interaction surface between S4 and S5 is involved in control of translational fidelity.

It is found in the plastid. It localises to the chloroplast. Functionally, one of the primary rRNA binding proteins, it binds directly to 16S rRNA where it nucleates assembly of the body of the 30S subunit. With S5 and S12 plays an important role in translational accuracy. The sequence is that of Small ribosomal subunit protein uS4c (rps4) from Lactuca sativa (Garden lettuce).